We begin with the raw amino-acid sequence, 418 residues long: ATP-dependent RNA helicase RhlB (418 aa).

The short motif at 9-37 (TKFADLPLEKSLISGLTSQGYEYCTPIQA) is the Q motif element. Residues 40-219 (LPITLTGKDI…FEHMNDPESI (180 aa)) form the Helicase ATP-binding domain. An ATP-binding site is contributed by 53–60 (AQTGTGKT). The DEAD box signature appears at 165 to 168 (DEAD). Positions 243–390 (KILLLLSLIE…CSEYDKNAML (148 aa)) constitute a Helicase C-terminal domain.

It belongs to the DEAD box helicase family. RhlB subfamily. Component of the RNA degradosome, which is a multiprotein complex involved in RNA processing and mRNA degradation.

It localises to the cytoplasm. It catalyses the reaction ATP + H2O = ADP + phosphate + H(+). Its function is as follows. DEAD-box RNA helicase involved in RNA degradation. Has RNA-dependent ATPase activity and unwinds double-stranded RNA. This chain is ATP-dependent RNA helicase RhlB, found in Psychromonas ingrahamii (strain DSM 17664 / CCUG 51855 / 37).